The following is a 274-amino-acid chain: 2-dehydro-3-deoxyphosphooctonate aldolase (274 aa).

It belongs to the KdsA family.

Its subcellular location is the cytoplasm. It carries out the reaction D-arabinose 5-phosphate + phosphoenolpyruvate + H2O = 3-deoxy-alpha-D-manno-2-octulosonate-8-phosphate + phosphate. The protein operates within carbohydrate biosynthesis; 3-deoxy-D-manno-octulosonate biosynthesis; 3-deoxy-D-manno-octulosonate from D-ribulose 5-phosphate: step 2/3. It functions in the pathway bacterial outer membrane biogenesis; lipopolysaccharide biosynthesis. The protein is 2-dehydro-3-deoxyphosphooctonate aldolase of Rickettsia canadensis (strain McKiel).